The following is a 417-amino-acid chain: MQSKNYFRKGFGLKAEVQDDLKAEYESSLIHEIRANGYTLRRGGVTVRLAEAFGFCWGVDKAVSMAYETHRMFAGRQLWITNEIIHNPLVNQHLRAMGIRFLDEDESGRRVPKDFERVSEKDVVILPAFGASTQEMQILDEKNCVIVDTTCPWVSAVWNRVGKYDRAEFTSIIHGKYQHEETVATASRARRYLVVLNLEEAQQVCDYILHGGDRRAFLAHFGMAACEGFDPDRDLVRVGIANQTTMLKGETERIGKLFERTMMRRYGPANLADHFMSHDTICDATQERQDAMFKLVEEPLDLLVVIGGYNSSNTTHLQEIAVERGLPSFHIDGADRLVSAQFIEHRDLHSKSLVRTKNWLPAGEVTVGVTAGASTPDRVVAEVIARIFELKGVGESGATGAISSPVLSSAEGGPSLS.

Residue Cys-56 coordinates [4Fe-4S] cluster. Residue His-86 participates in (2E)-4-hydroxy-3-methylbut-2-enyl diphosphate binding. His-86 contacts dimethylallyl diphosphate. An isopentenyl diphosphate-binding site is contributed by His-86. Cys-151 provides a ligand contact to [4Fe-4S] cluster. A (2E)-4-hydroxy-3-methylbut-2-enyl diphosphate-binding site is contributed by His-179. His-179 provides a ligand contact to dimethylallyl diphosphate. His-179 contacts isopentenyl diphosphate. Glu-181 serves as the catalytic Proton donor. Thr-244 provides a ligand contact to (2E)-4-hydroxy-3-methylbut-2-enyl diphosphate. Position 282 (Cys-282) interacts with [4Fe-4S] cluster. The (2E)-4-hydroxy-3-methylbut-2-enyl diphosphate site is built by Ser-311, Ser-312, Asn-313, and Ser-374. Residues Ser-311, Ser-312, Asn-313, and Ser-374 each coordinate dimethylallyl diphosphate. Residues Ser-311, Ser-312, Asn-313, and Ser-374 each coordinate isopentenyl diphosphate.

The protein belongs to the IspH family. It depends on [4Fe-4S] cluster as a cofactor.

The enzyme catalyses isopentenyl diphosphate + 2 oxidized [2Fe-2S]-[ferredoxin] + H2O = (2E)-4-hydroxy-3-methylbut-2-enyl diphosphate + 2 reduced [2Fe-2S]-[ferredoxin] + 2 H(+). It catalyses the reaction dimethylallyl diphosphate + 2 oxidized [2Fe-2S]-[ferredoxin] + H2O = (2E)-4-hydroxy-3-methylbut-2-enyl diphosphate + 2 reduced [2Fe-2S]-[ferredoxin] + 2 H(+). The protein operates within isoprenoid biosynthesis; dimethylallyl diphosphate biosynthesis; dimethylallyl diphosphate from (2E)-4-hydroxy-3-methylbutenyl diphosphate: step 1/1. Its pathway is isoprenoid biosynthesis; isopentenyl diphosphate biosynthesis via DXP pathway; isopentenyl diphosphate from 1-deoxy-D-xylulose 5-phosphate: step 6/6. Its function is as follows. Catalyzes the conversion of 1-hydroxy-2-methyl-2-(E)-butenyl 4-diphosphate (HMBPP) into a mixture of isopentenyl diphosphate (IPP) and dimethylallyl diphosphate (DMAPP). Acts in the terminal step of the DOXP/MEP pathway for isoprenoid precursor biosynthesis. This is 4-hydroxy-3-methylbut-2-enyl diphosphate reductase from Gloeobacter violaceus (strain ATCC 29082 / PCC 7421).